The following is a 193-amino-acid chain: Xanthine phosphoribosyltransferase (193 aa).

Positions 20 and 27 each coordinate xanthine. A 5-phospho-alpha-D-ribose 1-diphosphate-binding site is contributed by 128–132 (ANGQA). K156 serves as a coordination point for xanthine.

This sequence belongs to the purine/pyrimidine phosphoribosyltransferase family. Xpt subfamily. In terms of assembly, homodimer.

The protein resides in the cytoplasm. The enzyme catalyses XMP + diphosphate = xanthine + 5-phospho-alpha-D-ribose 1-diphosphate. It participates in purine metabolism; XMP biosynthesis via salvage pathway; XMP from xanthine: step 1/1. Converts the preformed base xanthine, a product of nucleic acid breakdown, to xanthosine 5'-monophosphate (XMP), so it can be reused for RNA or DNA synthesis. The sequence is that of Xanthine phosphoribosyltransferase from Streptococcus uberis (strain ATCC BAA-854 / 0140J).